Here is an 883-residue protein sequence, read N- to C-terminus: Alanine--tRNA ligase (883 aa).

4 residues coordinate Zn(2+): His563, His567, Cys677, and His681.

The protein belongs to the class-II aminoacyl-tRNA synthetase family. The cofactor is Zn(2+).

It is found in the cytoplasm. It carries out the reaction tRNA(Ala) + L-alanine + ATP = L-alanyl-tRNA(Ala) + AMP + diphosphate. Its function is as follows. Catalyzes the attachment of alanine to tRNA(Ala) in a two-step reaction: alanine is first activated by ATP to form Ala-AMP and then transferred to the acceptor end of tRNA(Ala). Also edits incorrectly charged Ser-tRNA(Ala) and Gly-tRNA(Ala) via its editing domain. The chain is Alanine--tRNA ligase from Cereibacter sphaeroides (strain ATCC 17029 / ATH 2.4.9) (Rhodobacter sphaeroides).